Here is a 311-residue protein sequence, read N- to C-terminus: Meteorin-like protein (311 aa).

Residues 1 to 45 (MRGVVWAARRRAGQQWPRSPGPGPGPPPPPPLLLLLLLLLGGASA) form the signal peptide. A disulfide bond links cysteine 52 and cysteine 75. A glycan (N-linked (GlcNAc...) asparagine) is linked at asparagine 103. Disulfide bonds link cysteine 107–cysteine 143, cysteine 188–cysteine 260, cysteine 191–cysteine 284, and cysteine 201–cysteine 306.

The protein belongs to the meteorin family. In terms of tissue distribution, abundantly expressed in adipose tissue.

It is found in the secreted. Hormone induced following exercise or cold exposure that promotes energy expenditure. Induced either in the skeletal muscle after exercise or in adipose tissue following cold exposure and is present in the circulation. Able to stimulate energy expenditure associated with the browning of the white fat depots and improves glucose tolerance. Does not promote an increase in a thermogenic gene program via direct action on adipocytes, but acts by stimulating several immune cell subtypes to enter the adipose tissue and activate their prothermogenic actions. Stimulates an eosinophil-dependent increase in IL4 expression and promotes alternative activation of adipose tissue macrophages, which are required for the increased expression of the thermogenic and anti-inflammatory gene programs in fat. Required for some cold-induced thermogenic responses, suggesting a role in metabolic adaptations to cold temperatures. This is Meteorin-like protein (Metrnl) from Rattus norvegicus (Rat).